Reading from the N-terminus, the 89-residue chain is GTP cyclohydrolase 1 feedback regulatory protein (89 aa).

It belongs to the GFRP family. Homopentamer. Forms a complex with GCH1 where a GCH1 homodecamer is sandwiched by two GFRP homopentamers.

It is found in the nucleus. The protein localises to the nucleus membrane. It localises to the cytoplasm. Its subcellular location is the cytosol. Its function is as follows. Mediates tetrahydrobiopterin inhibition of GTP cyclohydrolase 1. The chain is GTP cyclohydrolase 1 feedback regulatory protein (gchfr) from Danio rerio (Zebrafish).